A 488-amino-acid polypeptide reads, in one-letter code: Centrosomal protein cep57l1 (488 aa).

A coiled-coil region spans residues 71–226; it reads LESEKTHARD…AQVQTSLEVN (156 aa). 2 disordered regions span residues 232-272 and 311-342; these read SASS…PPSK and PRVS…LMSS. Over residues 241–250 the composition is skewed to basic residues; the sequence is RKVKKKKQSK. Basic and acidic residues-rich tracts occupy residues 259 to 270 and 314 to 325; these read PSSKEPLSKEPP and SQKDPKTVEHKP. Positions 377–403 form a coiled coil; that stretch reads KNTDMREDLERELDYLVKQMEIKSDQI. A disordered region spans residues 416 to 464; it reads LKKTAKKQPRPPSTTKPAEDEQNIGATDPCTPRNKGNLANGTGTPNSKA. Residues 452 to 464 show a composition bias toward polar residues; the sequence is NLANGTGTPNSKA.

Belongs to the translokin family. As to quaternary structure, interacts with clip1, mis12, ndc80 and zwint. Interacts with gamma-tubulin.

The protein resides in the cytoplasm. It is found in the cytoskeleton. Its subcellular location is the microtubule organizing center. It localises to the centrosome. The protein localises to the chromosome. The protein resides in the centromere. It is found in the kinetochore. Its subcellular location is the spindle. In terms of biological role, required for spindle microtubule attachment to both kinetochores and centrosomes. Also functions to tether minus-ends of spindle microtubules to centrosomes. May act by forming ring-like structures around microtubules, or by serving as a cross-linker or scaffold at the attachment site. In Xenopus laevis (African clawed frog), this protein is Centrosomal protein cep57l1 (cep57l1).